We begin with the raw amino-acid sequence, 543 residues long: Chaperonin GroEL (543 aa).

ATP-binding positions include 30 to 33, lysine 51, 87 to 91, glycine 415, 480 to 482, and aspartate 496; these read TLGP, DGTTT, and DAA.

Belongs to the chaperonin (HSP60) family. Forms a cylinder of 14 subunits composed of two heptameric rings stacked back-to-back. Interacts with the co-chaperonin GroES.

The protein resides in the cytoplasm. It carries out the reaction ATP + H2O + a folded polypeptide = ADP + phosphate + an unfolded polypeptide.. In terms of biological role, together with its co-chaperonin GroES, plays an essential role in assisting protein folding. The GroEL-GroES system forms a nano-cage that allows encapsulation of the non-native substrate proteins and provides a physical environment optimized to promote and accelerate protein folding. The polypeptide is Chaperonin GroEL (Hydrogenobaculum sp. (strain Y04AAS1)).